A 208-amino-acid polypeptide reads, in one-letter code: High frequency lysogenization protein HflD homolog (208 aa).

It belongs to the HflD family.

The protein resides in the cytoplasm. It localises to the cell inner membrane. The chain is High frequency lysogenization protein HflD homolog from Pseudomonas entomophila (strain L48).